Reading from the N-terminus, the 398-residue chain is MATTLATDVRLSIAHQTRFGFRLASTISSNPESTANNVAFSPVSLHVALSLITAGAGGATRDQLVATLGEGEAERLHALAEQVVQFVLADASYADSPRVTFANGVFVDASLPLKPSFQELAVCKYKAEAQSVDFQTKAAEVTAQVNSWVEKVTTGLIKDILPAGSISNTTRLVLGNALYFKGAWTDQFDSRVTKSDYFYLLDGSSIQTPFMYSSEEQYISSSDGLKVLKLPYKQGGDKRQFSMYILLPEAPSGIWSLAEKLSAEPELLERHIPRQKVALRQFKLPKFKISFGIEASDLLKHLGLQLPFSDEADLSEMVDSPMPQGLRISSVFHKTFVEVNETGTEAAAATIAKAVLLSASPPSDMDFIADHPFLFLIREDTSGVVLFIGHVVNPLRSL.

Positions 343 to 367 (GTEAAAATIAKAVLLSASPPSDMDF) are RCL.

Belongs to the serpin family.

Its function is as follows. Inhibits chymotrypsin and cathepsin G in vitro. The chain is Serpin-Z2A from Triticum aestivum (Wheat).